Here is a 283-residue protein sequence, read N- to C-terminus: MITHPQFDPVLISIGPLAVRWYALSYILGFILFTFLGRRRIAQGLSVFTKESLDDFLTWGILGVILGGRLGYVLFYKFSDYLAHPLDIFKVWEGGMSFHGGFLGVVIAIWLFGRKHGIGFLKLMDTVAPLVPLGLASGRIGNFINGELWGRVTDINAFWAMGFPQARYEDLEAAAHNPLWAEWLQQYGMLPRHPSQLYQFALEGICLFAVVWLFSKKQRPTGQVASLFLGGYGIFRFIAEFARQPDDYLGLLTLGLSMGQWLSVPMIVLGIVGFVRFGMKKQH.

4 helical membrane-spanning segments follow: residues 17–37 (LAVRWYALSYILGFILFTFLG), 56–76 (FLTWGILGVILGGRLGYVLFY), 92–112 (WEGGMSFHGGFLGVVIAIWLF), and 117–137 (GIGFLKLMDTVAPLVPLGLAS). An a 1,2-diacyl-sn-glycero-3-phospho-(1'-sn-glycerol)-binding site is contributed by Arg-139. Helical transmembrane passes span 194–214 (PSQLYQFALEGICLFAVVWLF), 222–242 (GQVASLFLGGYGIFRFIAEFA), and 255–275 (GLSMGQWLSVPMIVLGIVGFV).

The protein belongs to the Lgt family.

The protein localises to the cell inner membrane. The catalysed reaction is L-cysteinyl-[prolipoprotein] + a 1,2-diacyl-sn-glycero-3-phospho-(1'-sn-glycerol) = an S-1,2-diacyl-sn-glyceryl-L-cysteinyl-[prolipoprotein] + sn-glycerol 1-phosphate + H(+). It participates in protein modification; lipoprotein biosynthesis (diacylglyceryl transfer). Catalyzes the transfer of the diacylglyceryl group from phosphatidylglycerol to the sulfhydryl group of the N-terminal cysteine of a prolipoprotein, the first step in the formation of mature lipoproteins. This is Phosphatidylglycerol--prolipoprotein diacylglyceryl transferase from Neisseria meningitidis serogroup A / serotype 4A (strain DSM 15465 / Z2491).